Here is a 91-residue protein sequence, read N- to C-terminus: Small ribosomal subunit protein bS16c (91 aa).

It belongs to the bacterial ribosomal protein bS16 family.

The protein resides in the plastid. The protein localises to the chloroplast. The polypeptide is Small ribosomal subunit protein bS16c (Pelargonium hortorum (Common geranium)).